The following is a 233-amino-acid chain: Pyridoxal phosphate homeostasis protein (233 aa).

An N6-(pyridoxal phosphate)lysine modification is found at Lys36.

The protein belongs to the pyridoxal phosphate-binding protein YggS/PROSC family.

Functionally, pyridoxal 5'-phosphate (PLP)-binding protein, which is involved in PLP homeostasis. The protein is Pyridoxal phosphate homeostasis protein of Vibrio alginolyticus.